A 158-amino-acid polypeptide reads, in one-letter code: Cyclic pyranopterin monophosphate synthase (158 aa).

Substrate is bound by residues 75 to 77 (LCH) and 113 to 114 (ME). The active site involves Asp128.

The protein belongs to the MoaC family. In terms of assembly, homohexamer; trimer of dimers.

The catalysed reaction is (8S)-3',8-cyclo-7,8-dihydroguanosine 5'-triphosphate = cyclic pyranopterin phosphate + diphosphate. The protein operates within cofactor biosynthesis; molybdopterin biosynthesis. Catalyzes the conversion of (8S)-3',8-cyclo-7,8-dihydroguanosine 5'-triphosphate to cyclic pyranopterin monophosphate (cPMP). This is Cyclic pyranopterin monophosphate synthase from Actinobacillus pleuropneumoniae serotype 5b (strain L20).